We begin with the raw amino-acid sequence, 1198 residues long: Fibronectin type-III domain-containing protein 3A (1198 aa).

The disordered stretch occupies residues 160 to 221; the sequence is YGDVDAHSTH…PSPINEHNGL (62 aa). A compositionally biased stretch (basic and acidic residues) spans 163–201; that stretch reads VDAHSTHGRSNFRDERSSKTYERLQKKLKDRQGTQKDKM. Over residues 202 to 214 the composition is skewed to low complexity; that stretch reads SSPPSSPQKCPSP. Phosphoserine occurs at positions 203, 207, and 213. Fibronectin type-III domains are found at residues 268-369, 373-465, 469-562, 566-660, 664-757, 761-851, 861-950, 951-1045, and 1046-1151; these read NIVK…TLSC, IPNP…TSGC, MPAS…TCPD, IPVK…TPAV, PCLP…TAPG, QCKP…TPPS, EISD…TKPL, PPDP…TPKS, and VPAA…TEPP. Position 384 is an N6-acetyllysine (lysine 384). A helical transmembrane segment spans residues 1177–1197; sequence ILVLFAFFSILIAFIIQYFVI.

It belongs to the FNDC3 family. As to expression, expressed in the odontoblast and nerves in the dental pulp. Also expressed in trachea and to a lesser extent in the brain, liver, lung and kidney.

Its subcellular location is the golgi apparatus membrane. Mediates spermatid-Sertoli adhesion during spermatogenesis. This is Fibronectin type-III domain-containing protein 3A (FNDC3A) from Homo sapiens (Human).